We begin with the raw amino-acid sequence, 274 residues long: Bis(5'-nucleosyl)-tetraphosphatase, symmetrical (274 aa).

The protein belongs to the Ap4A hydrolase family.

It carries out the reaction P(1),P(4)-bis(5'-adenosyl) tetraphosphate + H2O = 2 ADP + 2 H(+). Its function is as follows. Hydrolyzes diadenosine 5',5'''-P1,P4-tetraphosphate to yield ADP. This is Bis(5'-nucleosyl)-tetraphosphatase, symmetrical from Shewanella sp. (strain MR-7).